Reading from the N-terminus, the 1026-residue chain is MGSDLLSHLSANDRALFWEYGQGAKAFVPFQCAHHAFEFHAKANPDLTAVEEFETKITYKELDRQANCLATRLRGSGVNVGSRVCLLVERSPWLVIGVLGVLKAGAAYIPFDGNVVSDSTLKHAIQDSAPTVILTLRKFQHRVADAASTEIVYLDETLCTSYNPNHCTKPRDFTSSTNSVYIIYTSGTTGTPKGVNVTHGNVTNLLCIAPGNLGMKPGIKVSQMLNISFDFAAWEILGSMVNGATLCLRGKTSKEWKAVMRNVDILFSTPSMLAPHNPADYPNLSTVVVAGEACPKATADLWGARVKFYNACGPTEVTIANTMQLHTPGDIVTIGGPTPNNSVYVLDENMRPVPIGEPGVMWGGGAGITKGYLNLPDKTAERYVPDPFADDGSMMFNTGDLGRWHSNGTLVHLGRIDNQVKIKGFRVELDGVATAMETCPGVQAATALLIDGELWGFATPASLKPEDIKEAALKVQPYYAVPTRYLTLDEFPETANGKTDKRILRQMALDAKNQEEKPANKAPAQNAAWVNLPTTVIAQAAGAQPPTIPHRSSERSLVSTVGSTVVGSQVKQVDSSASSALEKEEYIWSGYLEDEVPEKTQGRIVRNLRHQIFNLYRRLFSVVFIINMALFIWILVTKDYDAHRLGGIVVANVFIGVLMRQEMVINTLFIIFTAVPPSWPLCIRRVCARIYTIGGIHSGAGVSAFVWLVAFTAQATKEMINKGKTSVRTVAITYVILAELLGILIFAYPALRKKMHDTFENTHRYLGWTALALVWIQFMFLTIDYLPEGQTLGQTLVKSPHFWLVIIFTISIIWPWFRLRKVDCRPEVLSNHAVRLWFDYGVTPDAGTFVRLSDAPLKEWHGFASISIPGRTGYSVVVSRAGDWTSKHINDPPTKMWVKGVPTYGVLKLVPMFRRMVLVATGSGIGPCAPAILRRQIPMRVLWTAPNVRETFGDNLCNSILEACPDAVIYDTRKHGKPDMVKLVLRLVKEFDAEAVAIISNQPLTEKVVYGCMSRGIPAFGAIWDS.

The adenylation (A) domain stretch occupies residues 37 to 422; it reads FEFHAKANPD…LGRIDNQVKI (386 aa). AMP contacts are provided by residues 332–333 and 412–415; these read VT and HLGR. The tract at residues 556 to 638 is thiolation and peptide carrier (T) domain; sequence SLVSTVGSTV…ALFIWILVTK (83 aa). Residues 682 to 901 are reductase (R) domain; the sequence is CIRRVCARIY…PPTKMWVKGV (220 aa). NADP(+) contacts are provided by residues 685 to 688, 769 to 771, and tyrosine 840; these read RVCA and TAL.

The protein belongs to the adenylate-forming reductase family.

Functionally, adenylate-forming reductase, a natural product biosynthesis enzyme that resembles non-ribosomal peptide synthetases, yet serves to modify one substrate, rather than to condense two or more building blocks. The A-domain preferentially accepts L-serine, L-alanine and L-valine as substrates. The natural product of the enzyme is not yet known. This Coprinopsis cinerea (strain Okayama-7 / 130 / ATCC MYA-4618 / FGSC 9003) (Inky cap fungus) protein is Adenylate-forming reductase 06235.